The following is a 252-amino-acid chain: Imidazole glycerol phosphate synthase subunit HisF (252 aa).

Residues Asp-11 and Asp-130 contribute to the active site.

This sequence belongs to the HisA/HisF family. In terms of assembly, heterodimer of HisH and HisF.

It localises to the cytoplasm. The catalysed reaction is 5-[(5-phospho-1-deoxy-D-ribulos-1-ylimino)methylamino]-1-(5-phospho-beta-D-ribosyl)imidazole-4-carboxamide + L-glutamine = D-erythro-1-(imidazol-4-yl)glycerol 3-phosphate + 5-amino-1-(5-phospho-beta-D-ribosyl)imidazole-4-carboxamide + L-glutamate + H(+). Its pathway is amino-acid biosynthesis; L-histidine biosynthesis; L-histidine from 5-phospho-alpha-D-ribose 1-diphosphate: step 5/9. IGPS catalyzes the conversion of PRFAR and glutamine to IGP, AICAR and glutamate. The HisF subunit catalyzes the cyclization activity that produces IGP and AICAR from PRFAR using the ammonia provided by the HisH subunit. This chain is Imidazole glycerol phosphate synthase subunit HisF, found in Staphylococcus epidermidis (strain ATCC 35984 / DSM 28319 / BCRC 17069 / CCUG 31568 / BM 3577 / RP62A).